A 240-amino-acid chain; its full sequence is 6-phosphogluconolactonase (240 aa).

This sequence belongs to the glucosamine/galactosamine-6-phosphate isomerase family. 6-phosphogluconolactonase subfamily.

The enzyme catalyses 6-phospho-D-glucono-1,5-lactone + H2O = 6-phospho-D-gluconate + H(+). The protein operates within carbohydrate degradation; pentose phosphate pathway; D-ribulose 5-phosphate from D-glucose 6-phosphate (oxidative stage): step 2/3. In terms of biological role, hydrolysis of 6-phosphogluconolactone to 6-phosphogluconate. This chain is 6-phosphogluconolactonase (pgl), found in Nostoc sp. (strain PCC 7120 / SAG 25.82 / UTEX 2576).